The sequence spans 546 residues: Chaperonin GroEL 5 (546 aa).

ATP contacts are provided by residues 30-33 (TLGP), K51, 87-91 (DGTTT), G415, and D495.

Belongs to the chaperonin (HSP60) family. In terms of assembly, forms a cylinder of 14 subunits composed of two heptameric rings stacked back-to-back. Interacts with the co-chaperonin GroES.

It localises to the cytoplasm. The enzyme catalyses ATP + H2O + a folded polypeptide = ADP + phosphate + an unfolded polypeptide.. In terms of biological role, together with its co-chaperonin GroES, plays an essential role in assisting protein folding. The GroEL-GroES system forms a nano-cage that allows encapsulation of the non-native substrate proteins and provides a physical environment optimized to promote and accelerate protein folding. The protein is Chaperonin GroEL 5 of Paraburkholderia xenovorans (strain LB400).